The primary structure comprises 890 residues: ATP-dependent DNA helicase DDX11 (890 aa).

A Helicase ATP-binding domain is found at 4–424 (KSGRFPFPFQ…KNLMYIKQIL (421 aa)). 39 to 46 (SPTGTGKS) is an ATP binding site. The segment covering 71–85 (LLEGQKDSDVVKEKN) has biased composition (basic and acidic residues). Disordered stretches follow at residues 71 to 95 (LLEGQKDSDVVKEKNSNSGPPEPDW) and 176 to 199 (EYESDDEATPKSRLCDDDNDDDDD). Cys246, Cys264, Cys294, and Cys329 together coordinate [4Fe-4S] cluster. The DEAH box motif lies at 372-375 (DEAH).

Belongs to the DEAD box helicase family. DEAH subfamily. DDX11/CHL1 sub-subfamily. Requires [4Fe-4S] cluster as cofactor.

The protein resides in the nucleus. It localises to the nucleolus. It is found in the cytoplasm. Its subcellular location is the cytoskeleton. The protein localises to the spindle pole. The protein resides in the midbody. It localises to the microtubule organizing center. It is found in the centrosome. The enzyme catalyses Couples ATP hydrolysis with the unwinding of duplex DNA at the replication fork by translocating in the 5'-3' direction. This creates two antiparallel DNA single strands (ssDNA). The leading ssDNA polymer is the template for DNA polymerase III holoenzyme which synthesizes a continuous strand.. The catalysed reaction is ATP + H2O = ADP + phosphate + H(+). In terms of biological role, DNA-dependent ATPase and ATP-dependent DNA helicase that participates in various functions in genomic stability, including DNA replication, DNA repair and heterochromatin organization as well as in ribosomal RNA synthesis. Plays a role in DNA double-strand break (DSB) repair at the DNA replication fork during DNA replication recovery from DNA damage. Plays a role in the regulation of sister chromatid cohesion and mitotic chromosome segregation. Stimulates 5'-single-stranded DNA flap endonuclease activity of FEN1 in an ATP- and helicase-independent manner. Also plays a role in heterochromatin organization. Involved in rRNA transcription activation through binding to active hypomethylated rDNA gene loci by recruiting UBTF and the RNA polymerase Pol I transcriptional machinery. Plays a role in embryonic development. Associates with chromatin at DNA replication fork regions. Binds to single- and double-stranded DNAs. In Danio rerio (Zebrafish), this protein is ATP-dependent DNA helicase DDX11.